We begin with the raw amino-acid sequence, 77 residues long: Chassatide C13 (77 aa).

The first 24 residues, 1 to 24, serve as a signal peptide directing secretion; it reads MAKFATQLLLFVLIASLVMLEVHA. The propeptide at 25–44 is removed in mature form; it reads SNTFQVPDLGKRLLMNRDPN. A cross-link (cyclopeptide (Gly-Asn)) is located at residues 45–75; it reads GFPCAESCVYIPCTVTALLGCSCRNRVCYRN. Disulfide bonds link C48–C65, C52–C67, and C57–C72. The propeptide at 76 to 77 is removed in mature form; that stretch reads EL.

This is a cyclic peptide. As to expression, expressed in fruit and pedicel but not in root, leaf and stem (at protein level).

In terms of biological role, probably participates in a plant defense mechanism. The sequence is that of Chassatide C13 from Chassalia chartacea (Chassalia curviflora).